A 364-amino-acid chain; its full sequence is tRNA 2-selenouridine synthase (364 aa).

In terms of domain architecture, Rhodanese spans 15–138 (FVNDTPLMDM…LRRFLIETID (124 aa)). C98 acts as the S-selanylcysteine intermediate in catalysis.

The protein belongs to the SelU family. In terms of assembly, monomer.

It carries out the reaction 5-methylaminomethyl-2-thiouridine(34) in tRNA + selenophosphate + (2E)-geranyl diphosphate + H2O + H(+) = 5-methylaminomethyl-2-selenouridine(34) in tRNA + (2E)-thiogeraniol + phosphate + diphosphate. The catalysed reaction is 5-methylaminomethyl-2-thiouridine(34) in tRNA + (2E)-geranyl diphosphate = 5-methylaminomethyl-S-(2E)-geranyl-thiouridine(34) in tRNA + diphosphate. The enzyme catalyses 5-methylaminomethyl-S-(2E)-geranyl-thiouridine(34) in tRNA + selenophosphate + H(+) = 5-methylaminomethyl-2-(Se-phospho)selenouridine(34) in tRNA + (2E)-thiogeraniol. It catalyses the reaction 5-methylaminomethyl-2-(Se-phospho)selenouridine(34) in tRNA + H2O = 5-methylaminomethyl-2-selenouridine(34) in tRNA + phosphate. Its function is as follows. Involved in the post-transcriptional modification of the uridine at the wobble position (U34) of tRNA(Lys), tRNA(Glu) and tRNA(Gln). Catalyzes the conversion of 2-thiouridine (S2U-RNA) to 2-selenouridine (Se2U-RNA). Acts in a two-step process involving geranylation of 2-thiouridine (S2U) to S-geranyl-2-thiouridine (geS2U) and subsequent selenation of the latter derivative to 2-selenouridine (Se2U) in the tRNA chain. The protein is tRNA 2-selenouridine synthase of Photobacterium profundum (strain SS9).